Here is a 215-residue protein sequence, read N- to C-terminus: Cytochrome b6 (215 aa).

Residues Ile-32–Phe-52 form a helical membrane-spanning segment. Heme c is bound at residue Cys-35. Residues His-86 and His-100 each contribute to the heme b site. 3 helical membrane-spanning segments follow: residues Ala-90–Phe-110, Leu-116–Tyr-136, and Leu-186–Ile-206. Residues His-187 and His-202 each contribute to the heme b site.

Belongs to the cytochrome b family. PetB subfamily. In terms of assembly, the 4 large subunits of the cytochrome b6-f complex are cytochrome b6, subunit IV (17 kDa polypeptide, PetD), cytochrome f and the Rieske protein, while the 4 small subunits are PetG, PetL, PetM and PetN. The complex functions as a dimer. The cofactor is heme b. Heme c serves as cofactor.

Its subcellular location is the plastid. The protein resides in the chloroplast thylakoid membrane. In terms of biological role, component of the cytochrome b6-f complex, which mediates electron transfer between photosystem II (PSII) and photosystem I (PSI), cyclic electron flow around PSI, and state transitions. The sequence is that of Cytochrome b6 from Hordeum vulgare (Barley).